Here is a 194-residue protein sequence, read N- to C-terminus: Adapter protein MecA 2 (194 aa).

This sequence belongs to the MecA family. As to quaternary structure, homodimer.

In terms of biological role, enables the recognition and targeting of unfolded and aggregated proteins to the ClpC protease or to other proteins involved in proteolysis. Also involved in Spx degradation by ClpC. Acts negatively in the development of competence by binding ComK and recruiting it to the ClpCP protease. When overexpressed, inhibits sporulation. The protein is Adapter protein MecA 2 (mecB) of Bacillus subtilis (strain 168).